The following is a 53-amino-acid chain: UPF0391 membrane protein GFO_1615 (53 aa).

The next 2 membrane-spanning stretches (helical) occupy residues 4–24 and 27–47; these read LIVI…GGVA and AADI…ISVL.

It belongs to the UPF0391 family.

The protein resides in the cell membrane. The protein is UPF0391 membrane protein GFO_1615 of Christiangramia forsetii (strain DSM 17595 / CGMCC 1.15422 / KT0803) (Gramella forsetii).